The chain runs to 64 residues: Large ribosomal subunit protein bL35 (64 aa).

It belongs to the bacterial ribosomal protein bL35 family.

In Vibrio atlanticus (strain LGP32) (Vibrio splendidus (strain Mel32)), this protein is Large ribosomal subunit protein bL35.